The chain runs to 536 residues: Dual specificity calcium/calmodulin-dependent 3',5'-cyclic nucleotide phosphodiesterase 1B (536 aa).

The disordered stretch occupies residues Met-1–Pro-20. Phosphoserine occurs at positions 7 and 15. 2 calmodulin-binding regions span residues Pro-27–Glu-47 and Glu-118–Arg-141. Residues Val-146 to Gly-503 form the PDEase domain. The Proton donor role is filled by His-223. 4 residues coordinate Zn(2+): His-227, His-263, Asp-264, and Asp-370. Residue Asp-264 coordinates Mg(2+). Disordered stretches follow at residues Leu-447 to Pro-474 and Gln-494 to Asp-536. The segment covering Lys-455 to Gln-464 has biased composition (polar residues). 2 positions are modified to phosphoserine: Ser-466 and Ser-514.

This sequence belongs to the cyclic nucleotide phosphodiesterase family. PDE1 subfamily. In terms of assembly, homodimer. Zn(2+) is required as a cofactor. It depends on Mg(2+) as a cofactor.

Its subcellular location is the cytoplasm. The protein resides in the cytosol. The catalysed reaction is a nucleoside 3',5'-cyclic phosphate + H2O = a nucleoside 5'-phosphate + H(+). It catalyses the reaction 3',5'-cyclic GMP + H2O = GMP + H(+). It carries out the reaction 3',5'-cyclic AMP + H2O = AMP + H(+). Type I PDE are activated by the binding of calmodulin in the presence of Ca(2+). Its function is as follows. Cyclic nucleotide phosphodiesterase with a dual specificity for the second messengers cAMP and cGMP, which are key regulators of many important physiological processes. Has a preference for cGMP as a substrate. The sequence is that of Dual specificity calcium/calmodulin-dependent 3',5'-cyclic nucleotide phosphodiesterase 1B from Homo sapiens (Human).